Here is a 638-residue protein sequence, read N- to C-terminus: 1-deoxy-D-xylulose-5-phosphate synthase (638 aa).

Residues His75 and 116–118 (AHS) each bind thiamine diphosphate. Asp147 is a Mg(2+) binding site. Residues 148–149 (GA), Asn177, Tyr288, and Glu370 contribute to the thiamine diphosphate site. Position 177 (Asn177) interacts with Mg(2+).

Belongs to the transketolase family. DXPS subfamily. As to quaternary structure, homodimer. It depends on Mg(2+) as a cofactor. Requires thiamine diphosphate as cofactor.

It carries out the reaction D-glyceraldehyde 3-phosphate + pyruvate + H(+) = 1-deoxy-D-xylulose 5-phosphate + CO2. Its pathway is metabolic intermediate biosynthesis; 1-deoxy-D-xylulose 5-phosphate biosynthesis; 1-deoxy-D-xylulose 5-phosphate from D-glyceraldehyde 3-phosphate and pyruvate: step 1/1. Functionally, catalyzes the acyloin condensation reaction between C atoms 2 and 3 of pyruvate and glyceraldehyde 3-phosphate to yield 1-deoxy-D-xylulose-5-phosphate (DXP). In Cupriavidus pinatubonensis (strain JMP 134 / LMG 1197) (Cupriavidus necator (strain JMP 134)), this protein is 1-deoxy-D-xylulose-5-phosphate synthase.